A 469-amino-acid polypeptide reads, in one-letter code: Interstitial collagenase (469 aa).

The signal sequence occupies residues 1-18 (MLSLPLLLLLLWGMGSHS). Positions 19 to 99 (FPTVPSETRE…PRCGVPDVAE (81 aa)) are cleaved as a propeptide — activation peptide. The Cysteine switch motif lies at 90–97 (PRCGVPDV). Cys92 is a binding site for Zn(2+). Residues Asp124 and Asp158 each coordinate Ca(2+). 2 residues coordinate Zn(2+): His168 and Asp170. Residues Asp175, Gly176, Gly178, and Asn180 each coordinate Ca(2+). His183 is a Zn(2+) binding site. Positions 190, 192, and 194 each coordinate Ca(2+). His196 provides a ligand contact to Zn(2+). 3 residues coordinate Ca(2+): Asp198, Glu199, and Glu201. His218 contacts Zn(2+). Glu219 is an active-site residue. His222 and His228 together coordinate Zn(2+). Thr274 bears the Phosphothreonine mark. 4 Hemopexin repeats span residues 275–324 (PEVC…WPQL), 325–371 (PNGL…FGFP), 374–422 (VKNI…FPGI), and 423–466 (GDKV…WFNC). A disulfide bond links Cys278 and Cys466. The Ca(2+) site is built by Asp285 and Gln329. Tyr360 is subject to Phosphotyrosine; by PKDCC. 2 residues coordinate Ca(2+): Asp378 and Asp427.

Belongs to the peptidase M10A family. Requires Ca(2+) as cofactor. It depends on Zn(2+) as a cofactor. In terms of processing, tyrosine phosphorylated in platelets by PKDCC/VLK.

Its subcellular location is the secreted. The protein resides in the extracellular space. The protein localises to the extracellular matrix. The enzyme catalyses Cleavage of the triple helix of collagen at about three-quarters of the length of the molecule from the N-terminus, at 775-Gly-|-Ile-776 in the alpha1(I) chain. Cleaves synthetic substrates and alpha-macroglobulins at bonds where P1' is a hydrophobic residue.. Its activity is regulated as follows. Can be activated without removal of the activation peptide. Its function is as follows. Cleaves collagens of types I, II, and III at one site in the helical domain. Also cleaves collagens of types VII and X. This is Interstitial collagenase (MMP1) from Equus caballus (Horse).